We begin with the raw amino-acid sequence, 255 residues long: Proliferating cell nuclear antigen 2 (255 aa).

A DNA-binding region spans residues 61-80; that stretch reads HCDRNVSLGLDLKSLGKVLK.

Belongs to the PCNA family. As to quaternary structure, homotrimer. Interacts with the catalytic subunits of two DNA polymerase complexes: PolD1 in the delta complex and PolE1/DNApol-epsilon255 in the epsilon complex.

It is found in the nucleus. The protein localises to the chromosome. The protein resides in the cytoplasm. Likely to be an auxiliary protein of DNA polymerase delta complex and is probably involved in the control of DNA replication and repair by increasing the polymerase's processibility. May function independently of PCNA during DNA repair. This is Proliferating cell nuclear antigen 2 from Drosophila melanogaster (Fruit fly).